The chain runs to 293 residues: 4-hydroxy-tetrahydrodipicolinate synthase (293 aa).

Position 46 (Thr-46) interacts with pyruvate. The active-site Proton donor/acceptor is the Tyr-133. Residue Lys-161 is the Schiff-base intermediate with substrate of the active site. Residue Val-202 participates in pyruvate binding.

This sequence belongs to the DapA family. As to quaternary structure, homotetramer; dimer of dimers.

The protein localises to the cytoplasm. It carries out the reaction L-aspartate 4-semialdehyde + pyruvate = (2S,4S)-4-hydroxy-2,3,4,5-tetrahydrodipicolinate + H2O + H(+). It functions in the pathway amino-acid biosynthesis; L-lysine biosynthesis via DAP pathway; (S)-tetrahydrodipicolinate from L-aspartate: step 3/4. Functionally, catalyzes the condensation of (S)-aspartate-beta-semialdehyde [(S)-ASA] and pyruvate to 4-hydroxy-tetrahydrodipicolinate (HTPA). In Wolbachia pipientis subsp. Culex pipiens (strain wPip), this protein is 4-hydroxy-tetrahydrodipicolinate synthase.